Consider the following 273-residue polypeptide: Hydroxyethylthiazole kinase 2 (273 aa).

Residue Met-45 participates in substrate binding. Positions 120 and 173 each coordinate ATP. Gly-200 provides a ligand contact to substrate.

It belongs to the Thz kinase family. Mg(2+) is required as a cofactor.

It carries out the reaction 5-(2-hydroxyethyl)-4-methylthiazole + ATP = 4-methyl-5-(2-phosphooxyethyl)-thiazole + ADP + H(+). It participates in cofactor biosynthesis; thiamine diphosphate biosynthesis; 4-methyl-5-(2-phosphoethyl)-thiazole from 5-(2-hydroxyethyl)-4-methylthiazole: step 1/1. Its function is as follows. Catalyzes the phosphorylation of the hydroxyl group of 4-methyl-5-beta-hydroxyethylthiazole (THZ). This chain is Hydroxyethylthiazole kinase 2, found in Leuconostoc mesenteroides subsp. mesenteroides (strain ATCC 8293 / DSM 20343 / BCRC 11652 / CCM 1803 / JCM 6124 / NCDO 523 / NBRC 100496 / NCIMB 8023 / NCTC 12954 / NRRL B-1118 / 37Y).